A 191-amino-acid polypeptide reads, in one-letter code: Guanylate kinase (191 aa).

The 179-residue stretch at 9–187 (GQLIVITGPS…SLIALETAIF (179 aa)) folds into the Guanylate kinase-like domain. 16 to 23 (GPSGVGKG) is a binding site for ATP.

The protein belongs to the guanylate kinase family.

It localises to the cytoplasm. The catalysed reaction is GMP + ATP = GDP + ADP. Essential for recycling GMP and indirectly, cGMP. This Thermosynechococcus vestitus (strain NIES-2133 / IAM M-273 / BP-1) protein is Guanylate kinase.